The primary structure comprises 257 residues: NAD-capped RNA hydrolase NudC (257 aa).

Arginine 69 contacts substrate. The Zn(2+) site is built by cysteine 98 and cysteine 101. Residue glutamate 111 participates in substrate binding. Residues cysteine 116 and cysteine 119 each coordinate Zn(2+). Position 124 (tyrosine 124) interacts with substrate. The region spanning 125 to 248 (PQIAPCIIVA…TVARRLIEDT (124 aa)) is the Nudix hydrolase domain. Residues alanine 158, glutamate 174, and glutamate 178 each coordinate a divalent metal cation. A Nudix box motif is present at residues 159-180 (GFVEVGETLEQAVAREVMEESG). 192 to 199 (QPWPFPQS) is a substrate binding site. A divalent metal cation is bound at residue glutamate 219. Alanine 241 is a binding site for substrate.

This sequence belongs to the Nudix hydrolase family. NudC subfamily. In terms of assembly, homodimer. Mg(2+) is required as a cofactor. Requires Mn(2+) as cofactor. Zn(2+) serves as cofactor.

It carries out the reaction a 5'-end NAD(+)-phospho-ribonucleoside in mRNA + H2O = a 5'-end phospho-adenosine-phospho-ribonucleoside in mRNA + beta-nicotinamide D-ribonucleotide + 2 H(+). The enzyme catalyses NAD(+) + H2O = beta-nicotinamide D-ribonucleotide + AMP + 2 H(+). It catalyses the reaction NADH + H2O = reduced beta-nicotinamide D-ribonucleotide + AMP + 2 H(+). Functionally, mRNA decapping enzyme that specifically removes the nicotinamide adenine dinucleotide (NAD) cap from a subset of mRNAs by hydrolyzing the diphosphate linkage to produce nicotinamide mononucleotide (NMN) and 5' monophosphate mRNA. The NAD-cap is present at the 5'-end of some mRNAs and stabilizes RNA against 5'-processing. Has preference for mRNAs with a 5'-end purine. Catalyzes the hydrolysis of a broad range of dinucleotide pyrophosphates. This is NAD-capped RNA hydrolase NudC from Salmonella typhi.